The chain runs to 538 residues: Cryptic outer membrane porin BglH (538 aa).

Positions 1–25 (MFRRNLITSAILLMAPLAFSAQSLA) are cleaved as a signal peptide. The segment at 52–82 (KDEEKKKYTPATVNRSVSTNDQGYAANPFPT) is disordered. The segment covering 62 to 73 (ATVNRSVSTNDQ) has biased composition (polar residues).

This sequence belongs to the porin LamB (TC 1.B.3) family. Homomonomer; no physical evidence of a homotrimer has been found, however conductance experiments suggest it may be a homotrimer. The monomer probably consists of 18 antiparallel beta-strands.

It is found in the cell outer membrane. Part of a cryptic operon that is poorly expressed in vivo. May be an ancestral sugar porin with a broad carbohydrate specificity; it binds aromatic beta-D-glucosides such as arbutin and salicin, but with low affinity compared to the binding of maltooligosaccharides to the LamB porin. The protein is Cryptic outer membrane porin BglH (bglH) of Escherichia coli (strain K12).